Here is a 421-residue protein sequence, read N- to C-terminus: Imidazolonepropionase (421 aa).

Residues His-80 and His-82 each coordinate Fe(3+). Positions 80 and 82 each coordinate Zn(2+). 4-imidazolone-5-propanoate-binding residues include Arg-89, Tyr-152, and His-185. Position 152 (Tyr-152) interacts with N-formimidoyl-L-glutamate. His-249 lines the Fe(3+) pocket. His-249 is a binding site for Zn(2+). Residue Glu-252 participates in 4-imidazolone-5-propanoate binding. Asp-324 contacts Fe(3+). Asp-324 contributes to the Zn(2+) binding site. N-formimidoyl-L-glutamate contacts are provided by Asn-326 and Gly-328. Ser-329 serves as a coordination point for 4-imidazolone-5-propanoate.

This sequence belongs to the metallo-dependent hydrolases superfamily. HutI family. As to quaternary structure, homodimer. It depends on Zn(2+) as a cofactor. Fe(3+) is required as a cofactor.

It is found in the cytoplasm. The catalysed reaction is 4-imidazolone-5-propanoate + H2O = N-formimidoyl-L-glutamate. Its pathway is amino-acid degradation; L-histidine degradation into L-glutamate; N-formimidoyl-L-glutamate from L-histidine: step 3/3. Its function is as follows. Catalyzes the hydrolytic cleavage of the carbon-nitrogen bond in imidazolone-5-propanoate to yield N-formimidoyl-L-glutamate. It is the third step in the universal histidine degradation pathway. This Bacillus subtilis (strain 168) protein is Imidazolonepropionase.